A 511-amino-acid polypeptide reads, in one-letter code: Acetylcholine receptor subunit alpha-type unc-38 (511 aa).

The first 16 residues, 1 to 16 (MRSFWLFLLLLLFCIS), serve as a signal peptide directing secretion. The Extracellular segment spans residues 17-261 (FIKLTEGNED…QLRRKPLFYT (245 aa)). Asn-124 carries N-linked (GlcNAc...) asparagine glycosylation. An intrachain disulfide couples Cys-151 to Cys-165. N-linked (GlcNAc...) asparagine glycosylation is present at Asn-202. A disulfide bridge connects residues Cys-238 and Cys-239. The next 3 helical transmembrane spans lie at 262–282 (VNLVFPCVGISFLTILVFYLP), 291–311 (LCISILVALTIFFLLLTEIIP), and 324–344 (LLFTMVMVTLSVVVTVISLNL). At 345–464 (HFRTPTTHLM…WKYVAMVLDR (120 aa)) the chain is on the cytoplasmic side. Residues 465 to 485 (LFLLIFSIACFVGTVIILLRA) form a helical membrane-spanning segment.

The protein belongs to the ligand-gated ion channel (TC 1.A.9) family. Acetylcholine receptor (TC 1.A.9.1) subfamily. As to quaternary structure, component of nicotinic acetylcholine receptor. In muscles, composed of 2 non-alpha subunits lev-1 and unc-29, and 3 alpha subunits unc-38, unc-63 and lev-8. In cholinergic motoneurons, composed of 2 non-alpha subunits acr-2 and acr-3, and 3 alpha subunits unc-38, unc-63 and acr-12.

It is found in the postsynaptic cell membrane. The protein localises to the cell membrane. In terms of biological role, alpha subunit of nicotinic acetylcholine receptor (nAChR). Probably acts in cholinergic motoneurons to regulate presynaptic neurotransmitter release, thereby ensuring normal level of excitation of cholinergic motoneurons during locomotion. Involved in nAChR sensitivity to nicotine. This is Acetylcholine receptor subunit alpha-type unc-38 (unc-38) from Caenorhabditis elegans.